The sequence spans 583 residues: Afadin- and alpha-actinin-binding protein (583 aa).

3 coiled-coil regions span residues 108-220, 255-333, and 420-453; these read NNVE…LAIE, DYEA…QLTN, and EEKE…AIRL. Residues 285 to 328 form a disordered region; it reads LSPCPPLNRGGSAEESQELGDSDREERSAETSRETLDQSCEHAR. The span at 305-328 shows a compositional bias: basic and acidic residues; the sequence is DSDREERSAETSRETLDQSCEHAR. The segment at 480–527 is disordered; that stretch reads DRMRSSSSDGQSALSVKSEPEIRTSSSKAPPVKSSAYTTFSTPKSSKS. The segment covering 484–494 has biased composition (polar residues); sequence SSSSDGQSALS. Low complexity predominate over residues 504 to 515; sequence SSSKAPPVKSSA. Residues 516–527 are compositionally biased toward polar residues; sequence YTTFSTPKSSKS.

It belongs to the ADIP family.

Its subcellular location is the cell junction. The protein localises to the adherens junction. The protein resides in the cytoplasm. It is found in the cytoskeleton. It localises to the microtubule organizing center. Its subcellular location is the centrosome. The protein localises to the centriolar satellite. Its function is as follows. Belongs to an adhesion system, which plays a role in the organization of homotypic, interneuronal and heterotypic cell-cell adherens junctions (AJs). Involved in cell movement. Acts as a centrosome maturation factor, probably by maintaining the integrity of the pericentriolar material and proper microtubule nucleation at mitotic spindle poles. The sequence is that of Afadin- and alpha-actinin-binding protein (ssx2ip) from Oryzias latipes (Japanese rice fish).